The chain runs to 721 residues: 1,4-alpha-glucan branching enzyme GlgB (721 aa).

D404 acts as the Nucleophile in catalysis. E457 (proton donor) is an active-site residue.

It belongs to the glycosyl hydrolase 13 family. GlgB subfamily. Monomer.

The catalysed reaction is Transfers a segment of a (1-&gt;4)-alpha-D-glucan chain to a primary hydroxy group in a similar glucan chain.. It functions in the pathway glycan biosynthesis; glycogen biosynthesis. Its function is as follows. Catalyzes the formation of the alpha-1,6-glucosidic linkages in glycogen by scission of a 1,4-alpha-linked oligosaccharide from growing alpha-1,4-glucan chains and the subsequent attachment of the oligosaccharide to the alpha-1,6 position. In Novosphingobium aromaticivorans (strain ATCC 700278 / DSM 12444 / CCUG 56034 / CIP 105152 / NBRC 16084 / F199), this protein is 1,4-alpha-glucan branching enzyme GlgB.